A 436-amino-acid polypeptide reads, in one-letter code: 5-hydroxytryptamine receptor 6 (436 aa).

Residues Met-1–Gly-27 are Extracellular-facing. Asn-9 is a glycosylation site (N-linked (GlcNAc...) asparagine). Residues Trp-28–Cys-52 traverse the membrane as a helical segment. Residues Thr-53–Asn-62 lie on the Cytoplasmic side of the membrane. A helical membrane pass occupies residues Phe-63–Leu-88. Over Tyr-89 to Arg-96 the chain is Extracellular. Residues Gly-97–Leu-122 traverse the membrane as a helical segment. A disulfide bridge links Cys-99 with Cys-180. Asp-106 is a serotonin binding site. The Cytoplasmic portion of the chain corresponds to Asp-123–Arg-142. A helical membrane pass occupies residues Ala-143 to His-167. At Glu-168–Ser-185 the chain is on the extracellular side. The helical transmembrane segment at Leu-186–Cys-209 threads the bilayer. Over Arg-210 to Ala-266 the chain is Cytoplasmic. A helical membrane pass occupies residues Ser-267–Val-293. Asn-288 serves as a coordination point for serotonin. The Extracellular portion of the chain corresponds to Cys-294–Pro-299. A helical membrane pass occupies residues Gly-300–Phe-323. Residues Met-324–Pro-436 are Cytoplasmic-facing.

The protein belongs to the G-protein coupled receptor 1 family. As to quaternary structure, interacts with MTOR, RPTOR and NF1. Interacts with CDK5. As to expression, localized exclusively in the central nervous system, predominantly in the corpus striatum but also in various limbic and cortical regions.

It localises to the cell membrane. In terms of biological role, G-protein coupled receptor for 5-hydroxytryptamine (serotonin), a biogenic hormone that functions as a neurotransmitter, a hormone and a mitogen. Also has a high affinity for tricyclic psychotropic drugs. Ligand binding causes a conformation change that triggers signaling via guanine nucleotide-binding proteins (G proteins) and modulates the activity of downstream effectors. HTR6 is coupled to G(s) G alpha proteins and mediates activation of adenylate cyclase activity. Controls pyramidal neurons migration during corticogenesis, through the regulation of CDK5 activity. Is an activator of mTOR signaling. The protein is 5-hydroxytryptamine receptor 6 (Htr6) of Rattus norvegicus (Rat).